A 155-amino-acid polypeptide reads, in one-letter code: Transcriptional regulator MraZ (155 aa).

2 consecutive SpoVT-AbrB domains span residues 7–63 (REQH…EPSV) and 92–135 (LDQT…EPLR).

Belongs to the MraZ family. As to quaternary structure, forms oligomers.

The protein localises to the cytoplasm. The protein resides in the nucleoid. The protein is Transcriptional regulator MraZ of Chlorobaculum tepidum (strain ATCC 49652 / DSM 12025 / NBRC 103806 / TLS) (Chlorobium tepidum).